We begin with the raw amino-acid sequence, 356 residues long: Cysteine protease XCP2 (356 aa).

The signal sequence occupies residues 1-26 (MALSSPSRILCFALALSAASLSLSFA). Residues 27-137 (SSHDYSIVGY…AEFAYRDVEA (111 aa)) constitute a propeptide, activation peptide. Disulfide bonds link C159/C201, C193/C234, and C292/C343. C162 is a catalytic residue. The N-linked (GlcNAc...) asparagine glycan is linked to N181. Residues H298 and N318 contribute to the active site.

Belongs to the peptidase C1 family. As to quaternary structure, interacts with PRN2. As to expression, mostly expressed in roots, stems and flowers. Confined to tracheary elements, and specifically to xylem.

The protein resides in the vacuole. The protein localises to the cell membrane. Its function is as follows. Cysteine protease involved in xylem tracheary element (TE) autolysis during xylogenesis in roots. Participates in micro autolysis within the intact central vacuole before mega autolysis is initiated by tonoplast implosion. Involved in susceptibility to the bacterial plant pathogen Ralstonia solanacearum. The chain is Cysteine protease XCP2 from Arabidopsis thaliana (Mouse-ear cress).